The sequence spans 502 residues: Maturase K (502 aa).

The protein belongs to the intron maturase 2 family. MatK subfamily.

It localises to the plastid. The protein resides in the chloroplast. Its function is as follows. Usually encoded in the trnK tRNA gene intron. Probably assists in splicing its own and other chloroplast group II introns. Binds its homologous trnK precursor transcript. The chain is Maturase K from Sinapis alba (White mustard).